The following is a 185-amino-acid chain: ATP-dependent protease subunit HslV (185 aa).

T13 is a catalytic residue. G167, C170, and T173 together coordinate Na(+).

This sequence belongs to the peptidase T1B family. HslV subfamily. A double ring-shaped homohexamer of HslV is capped on each side by a ring-shaped HslU homohexamer. The assembly of the HslU/HslV complex is dependent on binding of ATP.

It is found in the cytoplasm. The catalysed reaction is ATP-dependent cleavage of peptide bonds with broad specificity.. Allosterically activated by HslU binding. Functionally, protease subunit of a proteasome-like degradation complex believed to be a general protein degrading machinery. This Sinorhizobium fredii (strain NBRC 101917 / NGR234) protein is ATP-dependent protease subunit HslV.